Consider the following 373-residue polypeptide: Chaperone protein DnaJ (373 aa).

The J domain maps to 5-69 (DYYEVLGVNK…NKRVNYDQFG (65 aa)). The segment at 130-212 (GTKKEISIKK…CKGKGTENKT (83 aa)) adopts a CR-type zinc-finger fold. The Zn(2+) site is built by cysteine 143, cysteine 146, cysteine 160, cysteine 163, cysteine 186, cysteine 189, cysteine 200, and cysteine 203. 4 CXXCXGXG motif repeats span residues 143 to 150 (CHTCNGDG), 160 to 167 (CSYCNGAG), 186 to 193 (CPKCEGSG), and 200 to 207 (CPTCKGKG).

Belongs to the DnaJ family. As to quaternary structure, homodimer. The cofactor is Zn(2+).

Its subcellular location is the cytoplasm. In terms of biological role, participates actively in the response to hyperosmotic and heat shock by preventing the aggregation of stress-denatured proteins and by disaggregating proteins, also in an autonomous, DnaK-independent fashion. Unfolded proteins bind initially to DnaJ; upon interaction with the DnaJ-bound protein, DnaK hydrolyzes its bound ATP, resulting in the formation of a stable complex. GrpE releases ADP from DnaK; ATP binding to DnaK triggers the release of the substrate protein, thus completing the reaction cycle. Several rounds of ATP-dependent interactions between DnaJ, DnaK and GrpE are required for fully efficient folding. Also involved, together with DnaK and GrpE, in the DNA replication of plasmids through activation of initiation proteins. In Staphylococcus epidermidis (strain ATCC 35984 / DSM 28319 / BCRC 17069 / CCUG 31568 / BM 3577 / RP62A), this protein is Chaperone protein DnaJ.